The primary structure comprises 448 residues: Trigger factor (448 aa).

Residues 172–257 form the PPIase FKBP-type domain; that stretch reads GDRVTVDFVG…MKKIEWPHLP (86 aa).

The protein belongs to the FKBP-type PPIase family. Tig subfamily.

The protein localises to the cytoplasm. It catalyses the reaction [protein]-peptidylproline (omega=180) = [protein]-peptidylproline (omega=0). Involved in protein export. Acts as a chaperone by maintaining the newly synthesized protein in an open conformation. Functions as a peptidyl-prolyl cis-trans isomerase. In Paraburkholderia xenovorans (strain LB400), this protein is Trigger factor.